The chain runs to 79 residues: uncharacterized protein (79 aa).

Helical transmembrane passes span 18–38 (IWII…IVLI) and 50–70 (GITF…FFLF).

It localises to the host membrane. This is an uncharacterized protein from Spiroplasma virus SpV1-R8A2 B (SpV1).